A 365-amino-acid polypeptide reads, in one-letter code: uncharacterized protein (365 aa).

Residues 18 to 46 are a coiled coil; sequence TAQEALTLIEKLDSDYKEKEEKITALSVH.

This is an uncharacterized protein from Bacillus subtilis (strain 168).